We begin with the raw amino-acid sequence, 290 residues long: Acetylglutamate kinase (290 aa).

Substrate contacts are provided by residues 65–66 (GG), arginine 87, and asparagine 186.

The protein belongs to the acetylglutamate kinase family. ArgB subfamily.

Its subcellular location is the cytoplasm. It catalyses the reaction N-acetyl-L-glutamate + ATP = N-acetyl-L-glutamyl 5-phosphate + ADP. It participates in amino-acid biosynthesis; L-arginine biosynthesis; N(2)-acetyl-L-ornithine from L-glutamate: step 2/4. In terms of biological role, catalyzes the ATP-dependent phosphorylation of N-acetyl-L-glutamate. The polypeptide is Acetylglutamate kinase (Mycolicibacterium gilvum (strain PYR-GCK) (Mycobacterium gilvum (strain PYR-GCK))).